A 1074-amino-acid polypeptide reads, in one-letter code: Insulin receptor substrate 2-A (1074 aa).

Residues 1 to 64 (MAGVLCPTEE…PPASAAEDDV (64 aa)) form a disordered region. 2 consecutive short sequence motifs (YXXM motif) follow at residues 33 to 36 (YRRM) and 145 to 148 (YFAM). In terms of domain architecture, PH spans 63 to 168 (DVRKRGYLRK…WYQALSELIN (106 aa)). One can recognise an IRS-type PTB domain in the interval 193 to 297 (FKEVWQVNVK…DTMKALKAYS (105 aa)). 3 disordered regions span residues 326–370 (PPSQ…RPFR), 426–461 (CSSS…SDEY), and 475–510 (SNTP…SRDD). The span at 347–361 (SAKNNSFRFRTSSEG) shows a compositional bias: polar residues. 2 stretches are compositionally biased toward low complexity: residues 426-435 (CSSSGHGSAS) and 442-454 (SSSS…SDGG). Residues 475-504 (SNTPDSLGNTPPIQEENTLSDYMSMSTHSQ) are compositionally biased toward polar residues. Short sequence motifs (YXXM motif) lie at residues 496–499 (YMSM), 592–595 (YMPM), 605–608 (YLPM), 631–634 (YMMM), 663–666 (YMDM), and 710–713 (YVPM). The disordered stretch occupies residues 801–821 (TPYSLSADGSPSSLGSSCDHR). The segment covering 804 to 817 (SLSADGSPSSLGSS) has biased composition (low complexity). The YXXM motif 9 motif lies at 888–891 (YTTM).

Phosphorylated by INSR.

Its function is as follows. Potentiates insulin signaling. This chain is Insulin receptor substrate 2-A (irs2-a), found in Xenopus laevis (African clawed frog).